Reading from the N-terminus, the 380-residue chain is Cytochrome b (380 aa).

Transmembrane regions (helical) follow at residues 33-53, 77-98, 113-133, and 178-198; these read FGSL…FLAM, WLIR…FLHV, WNMG…GYVL, and FFAF…VHLL. Residues His-83 and His-97 each contribute to the heme b site. Residues His-182 and His-196 each contribute to the heme b site. Residue His-201 coordinates a ubiquinone. The next 4 helical transmembrane spans lie at 226–246, 288–308, 320–340, and 347–367; these read IKDF…TLFF, LGGV…PLLH, ITQT…WIGG, and FIII…ILMP.

The protein belongs to the cytochrome b family. In terms of assembly, the cytochrome bc1 complex contains 11 subunits: 3 respiratory subunits (MT-CYB, CYC1 and UQCRFS1), 2 core proteins (UQCRC1 and UQCRC2) and 6 low-molecular weight proteins (UQCRH/QCR6, UQCRB/QCR7, UQCRQ/QCR8, UQCR10/QCR9, UQCR11/QCR10 and a cleavage product of UQCRFS1). This cytochrome bc1 complex then forms a dimer. Heme b is required as a cofactor.

The protein localises to the mitochondrion inner membrane. Its function is as follows. Component of the ubiquinol-cytochrome c reductase complex (complex III or cytochrome b-c1 complex) that is part of the mitochondrial respiratory chain. The b-c1 complex mediates electron transfer from ubiquinol to cytochrome c. Contributes to the generation of a proton gradient across the mitochondrial membrane that is then used for ATP synthesis. This chain is Cytochrome b (MT-CYB), found in Microtus guentheri (Gunther's vole).